The chain runs to 120 residues: Large ribosomal subunit protein uL18 (120 aa).

Belongs to the universal ribosomal protein uL18 family. Part of the 50S ribosomal subunit; part of the 5S rRNA/L5/L18/L25 subcomplex. Contacts the 5S and 23S rRNAs.

Functionally, this is one of the proteins that bind and probably mediate the attachment of the 5S RNA into the large ribosomal subunit, where it forms part of the central protuberance. The polypeptide is Large ribosomal subunit protein uL18 (Finegoldia magna (strain ATCC 29328 / DSM 20472 / WAL 2508) (Peptostreptococcus magnus)).